A 264-amino-acid chain; its full sequence is MKTYLQLLEHILQQGVEKSDRTGTGTLSVFGYQMRFDLTKGFPLVTTKKLHTRSIVHELLWFLRGDTNISYLKENGVTIWDEWADNNGDLGPVYGKQWRSWPTADGHTIDQLSDVVQQIKSNPDSRRLIVSAWNVGELDKMALMPCHALFQFYVANNKLSCQLYQRSADVFLGVPFNIASYSLLTHMVAQQCNLDVAEFIWTGGDCHLYLNHLEQAQIQLTREPLPLPSLTIKRKPASLFDYAYEDFEFVNYQSHPAIKAPIAV.

Residue R21 participates in dUMP binding. H51 contacts (6R)-5,10-methylene-5,6,7,8-tetrahydrofolate. 126–127 (RR) lines the dUMP pocket. C146 serves as the catalytic Nucleophile. DUMP-binding positions include 166 to 169 (RSAD), N177, and 207 to 209 (HLY). A (6R)-5,10-methylene-5,6,7,8-tetrahydrofolate-binding site is contributed by D169. A263 is a binding site for (6R)-5,10-methylene-5,6,7,8-tetrahydrofolate.

This sequence belongs to the thymidylate synthase family. Bacterial-type ThyA subfamily. As to quaternary structure, homodimer.

Its subcellular location is the cytoplasm. It catalyses the reaction dUMP + (6R)-5,10-methylene-5,6,7,8-tetrahydrofolate = 7,8-dihydrofolate + dTMP. It functions in the pathway pyrimidine metabolism; dTTP biosynthesis. In terms of biological role, catalyzes the reductive methylation of 2'-deoxyuridine-5'-monophosphate (dUMP) to 2'-deoxythymidine-5'-monophosphate (dTMP) while utilizing 5,10-methylenetetrahydrofolate (mTHF) as the methyl donor and reductant in the reaction, yielding dihydrofolate (DHF) as a by-product. This enzymatic reaction provides an intracellular de novo source of dTMP, an essential precursor for DNA biosynthesis. The chain is Thymidylate synthase from Legionella pneumophila (strain Corby).